Consider the following 485-residue polypeptide: MFAHTALRQRCAKWLFATGLFLLLGACVEKPSTLERVKEDGVLRVITRNSPATYFQDRNGETGFEYELVKRFADDLGVKLEIETADNLDELFDDLGKPSGPVLAAAGLVNSERRKTQARFSHPYLEVTPQVIYRNGRSRPTDPKGLVGKKIMVLKGSSHADQLAELKRRYPGLEYEESDAVEVVDLLRMVDEGQIDLTLVDSNELAMNQVYFPNVRVAFDLGETRNQRWAVAPGEDNSLLNEVNEFLDKSQKNGTLQRLKDRYYGHVDVLGYVGAYTFAQHLQQRLPKYEKYFKSYAKVEQVDWRLLAAIGYQESLWQPEVTSKTGVRGLMMLTQRTAQAMGVSNRLDPRQSIKGGAKYFMLVKQQLDDSIKEPDRTWFALAAYNVGSGHLEDARTLAKREKLNPNKWLDVKKMLPRLSQKQWYRQTKYGYARGGEPVHFVANIRRYYDILTWVTQPQLEGQVAEGNLHVPGVNKDKPAEQSPPM.

The signal sequence occupies residues 1–29 (MFAHTALRQRCAKWLFATGLFLLLGACVE). The tract at residues 30–267 (KPSTLERVKE…RLKDRYYGHV (238 aa)) is non-LT domain. Residues 268–485 (DVLGYVGAYT…DKPAEQSPPM (218 aa)) form an LT domain region. E314 is a catalytic residue. The interval 465-485 (EGNLHVPGVNKDKPAEQSPPM) is disordered.

This sequence in the N-terminal section; belongs to the bacterial solute-binding protein 3 family. It in the C-terminal section; belongs to the transglycosylase Slt family.

It is found in the cell outer membrane. It catalyses the reaction Exolytic cleavage of the (1-&gt;4)-beta-glycosidic linkage between N-acetylmuramic acid (MurNAc) and N-acetylglucosamine (GlcNAc) residues in peptidoglycan, from either the reducing or the non-reducing ends of the peptidoglycan chains, with concomitant formation of a 1,6-anhydrobond in the MurNAc residue.. Functionally, murein-degrading enzyme that degrades murein glycan strands and insoluble, high-molecular weight murein sacculi, with the concomitant formation of a 1,6-anhydromuramoyl product. Lytic transglycosylases (LTs) play an integral role in the metabolism of the peptidoglycan (PG) sacculus. Their lytic action creates space within the PG sacculus to allow for its expansion as well as for the insertion of various structures such as secretion systems and flagella. The polypeptide is Membrane-bound lytic murein transglycosylase F (Pseudomonas putida (strain W619)).